We begin with the raw amino-acid sequence, 130 residues long: Albumin-1 A (130 aa).

An N-terminal signal peptide occupies residues Met-1–Ala-26. 3 disulfides stabilise this stretch: Cys-29–Cys-46, Cys-33–Cys-48, and Cys-41–Cys-58. Propeptides lie at residues Val-64–Asn-69 and Leu-123–Ala-130.

In terms of processing, the C-terminal glycine may be removed from PA1b. In terms of tissue distribution, major component of both the cotyledons and embryonic axes of mature seeds.

Its function is as follows. PA1b binds to basic 7S globulin (BG) and stimulates its phosphorylation activity. Involved in the signal transduction system to regulate the growth and differentiation as a hormone peptide. Toxic to various insects through binding to a high affinity binding site in the insect gut. The chain is Albumin-1 A from Pisum sativum (Garden pea).